Consider the following 637-residue polypeptide: ATP-dependent zinc metalloprotease FtsH (637 aa).

Residues 1-6 (MNNQGR) lie on the Cytoplasmic side of the membrane. A helical membrane pass occupies residues 7-27 (SILAWAALFIFVILLFNVFQS). At 28–103 (DGLLGVRNNI…VVPLETRMNT (76 aa)) the chain is on the periplasmic side. Residues 104-124 (FLGFLISWFPMLLLIGVWVFF) form a helical membrane-spanning segment. Residues 125–637 (MRQMHGGGKA…TKDKKENIIS (513 aa)) are Cytoplasmic-facing. Residue 195–202 (GPPGTGKT) coordinates ATP. Histidine 417 provides a ligand contact to Zn(2+). Glutamate 418 is a catalytic residue. Residues histidine 421 and aspartate 495 each contribute to the Zn(2+) site.

In the central section; belongs to the AAA ATPase family. It in the C-terminal section; belongs to the peptidase M41 family. Homohexamer. Zn(2+) is required as a cofactor.

Its subcellular location is the cell inner membrane. In terms of biological role, acts as a processive, ATP-dependent zinc metallopeptidase for both cytoplasmic and membrane proteins. Plays a role in the quality control of integral membrane proteins. This is ATP-dependent zinc metalloprotease FtsH from Rickettsia prowazekii (strain Madrid E).